The sequence spans 606 residues: Mitogen-activated protein kinase 20 (606 aa).

The region spanning 25–316 (FKVQEVIGKG…AEEALADPYF (292 aa)) is the Protein kinase domain. ATP-binding positions include 31 to 39 (IGKGSYGVV) and K54. D151 acts as the Proton acceptor in catalysis. A Phosphothreonine modification is found at T187. The TXY motif lies at 187–189 (TDY). Y189 is subject to Phosphotyrosine. The residue at position 192 (T192) is a Phosphothreonine.

This sequence belongs to the protein kinase superfamily. CMGC Ser/Thr protein kinase family. MAP kinase subfamily. Post-translationally, dually phosphorylated on Thr-187 and Tyr-189, which activates the enzyme.

It carries out the reaction L-seryl-[protein] + ATP = O-phospho-L-seryl-[protein] + ADP + H(+). It catalyses the reaction L-threonyl-[protein] + ATP = O-phospho-L-threonyl-[protein] + ADP + H(+). With respect to regulation, activated by threonine and tyrosine phosphorylation. In Arabidopsis thaliana (Mouse-ear cress), this protein is Mitogen-activated protein kinase 20 (MPK20).